A 512-amino-acid chain; its full sequence is Acid-sensing ion channel 2 (512 aa).

At 1-37 the chain is on the cytoplasmic side; that stretch reads MDLKESPSEGSLQPSSIQIFANTSTLHGIRHIFVYGP. Phosphoserine is present on residues Ser8 and Ser11. A helical membrane pass occupies residues 38-58; the sequence is LTIRRVLWAVAFVGSLGLLLV. Residues 59-427 are Extracellular-facing; that stretch reads ESSERVSYYF…EQKKAYEVAA (369 aa). Disulfide bonds link Cys92–Cys193, Cys289–Cys364, Cys307–Cys360, Cys311–Cys358, Cys320–Cys342, and Cys322–Cys334. Asn365 and Asn392 each carry an N-linked (GlcNAc...) asparagine glycan. Residues 428 to 448 form a helical membrane-spanning segment; sequence LLGDIGGQMGLFIGASILTIL. The short motif at 441–443 is the GAS motif; ion selectivity filter element; it reads GAS. Over 449-512 the chain is Cytoplasmic; that stretch reads ELFDYIYELI…ALGTLEEIAC (64 aa).

Belongs to the amiloride-sensitive sodium channel (TC 1.A.6) family. ASIC2 subfamily. In terms of assembly, can form homotrimers. Heterotrimer; forms functional heterotrimers producing channel with different properties. Forms heterotrimers with ASIC1; while ASIC1 determines current amplitude, ASIC2 influences the properties of the current. Forms heterotrimers with ASIC3; resulting in channels with distinct properties. Interacts with STOM; STOM regulates the gating of ASIC2-containing channels. Interacts with PICK1; promotes ASIC3 phosphorylation by PKC and activation of ASIC2/ASIC3 heterotrimers. In terms of tissue distribution, expressed by sensory neurons. Expressed by nociceptive sensory neurons, spiral ganglion (SG) neurons and the retina (at protein level). Expressed in outer nuclear layer of retina (photoreceptors) and to a lower extent in distal and proximal inner nuclear layer.

It localises to the cell membrane. It catalyses the reaction Na(+)(in) = Na(+)(out). The catalysed reaction is K(+)(in) = K(+)(out). It carries out the reaction Li(+)(in) = Li(+)(out). Its activity is regulated as follows. Inhibited by the diuretic drug amiloride. Functionally, forms pH-gated trimeric sodium channels that act as postsynaptic excitatory sensors in the nervous system. Upon extracellular acidification, these channels generate rapid, transient inward currents that fully desensitize. Highly selective for sodium, they are permeable to other cations. By forming heterotrimeric channels with ASIC1, could contribute to synaptic plasticity, learning, and memory. Additionally, as acid sensors at nerve terminals, plays a role in mechanosensation and phototransduction. Has no pH-gated sodium channel activity per se but can associate with other ASICs to produce functional channels with specific properties. In Mus musculus (Mouse), this protein is Acid-sensing ion channel 2.